Here is a 227-residue protein sequence, read N- to C-terminus: Prolactin-5A1 (227 aa).

The signal sequence occupies residues 1 to 27; the sequence is MQIQPHPSGALLLLLLSNLLMWENVAS. N-linked (GlcNAc...) asparagine glycosylation occurs at asparagine 47. Cysteine 85 and cysteine 204 form a disulfide bridge.

It belongs to the somatotropin/prolactin family. As to expression, expressed specifically in placenta. Highly expressed in invasive trophoblast cells lining the central placental vessel.

It localises to the secreted. This is Prolactin-5A1 (Prl5a1) from Rattus norvegicus (Rat).